A 193-amino-acid polypeptide reads, in one-letter code: N-(5'-phosphoribosyl)anthranilate isomerase (193 aa).

The protein belongs to the TrpF family.

The catalysed reaction is N-(5-phospho-beta-D-ribosyl)anthranilate = 1-(2-carboxyphenylamino)-1-deoxy-D-ribulose 5-phosphate. It functions in the pathway amino-acid biosynthesis; L-tryptophan biosynthesis; L-tryptophan from chorismate: step 3/5. The chain is N-(5'-phosphoribosyl)anthranilate isomerase from Streptococcus mutans serotype c (strain ATCC 700610 / UA159).